A 472-amino-acid chain; its full sequence is Alanine--anticapsin ligase (472 aa).

Residue glutamate 109 participates in Mg(2+) binding. The ATP site is built by lysine 138 and lysine 178. The ATP-grasp domain maps to 142-355 (RAAFNRAGVK…MAQLLLDVLC (214 aa)). Leucine 182 is a Mg(2+) binding site. ATP is bound by residues 184–185 (SS), 226–229 (EEFL), and glutamine 268. Residues glutamate 273 and 309–311 (HTE) each bind substrate. Residues glutamate 311 and glutamate 324 each coordinate Mg(2+). 328-331 (RFAG) provides a ligand contact to substrate.

As to quaternary structure, monomer or homodimer. The cofactor is Mg(2+).

It catalyses the reaction L-anticapsin + L-alanine + ATP = bacilysin + ADP + phosphate + H(+). It participates in antibiotic biosynthesis; bacilysin biosynthesis. Functionally, part of the bacABCDEFG operon responsible for the biosynthesis of bacilysin, an irreversible inactivator of the glutaminase domain of glucosamine synthetase. Catalyzes the formation of alpha-dipeptides from various L-amino acids in the presence of ATP. In vivo catalyzes the ligation of L-alanine and L-anticapsin (epoxycyclohexanonyl-Ala) to produce the final bacilysin antibiotic (L-Ala-L-4S-cyclohexenonyl-Ala dipeptide). The chain is Alanine--anticapsin ligase from Bacillus amyloliquefaciens (Bacillus velezensis).